A 107-amino-acid chain; its full sequence is Apolipoprotein E (107 aa).

Tandem repeats lie at residues 11–32, 33–54, 55–76, 77–98, and 99–107. The 5 X 22 AA approximate tandem repeats stretch occupies residues 11-107; it reads ALMDETMKEL…LRDVDDLQKR (97 aa). Met-74 carries the post-translational modification Methionine sulfoxide. Ser-78 is modified (phosphoserine). Residues 89–99 form an LDL and other lipoprotein receptors binding region; the sequence is HLRKLRKRLLR. Residue 93-96 coordinates heparin; it reads LRKR.

This sequence belongs to the apolipoprotein A1/A4/E family. As to quaternary structure, homotetramer. May interact with ABCA1; functionally associated with ABCA1 in the biogenesis of HDLs. May interact with APP/A4 amyloid-beta peptide; the interaction is extremely stable in vitro but its physiological significance is unclear. May interact with MAPT. May interact with MAP2. In the cerebrospinal fluid, interacts with secreted SORL1. Interacts with PMEL; this allows the loading of PMEL luminal fragment on ILVs to induce fibril nucleation. APOE exists as multiple glycosylated and sialylated glycoforms within cells and in plasma. The extent of glycosylation and sialylation are tissue and context specific. In terms of processing, glycated in plasma VLDL. Post-translationally, phosphorylated by FAM20C in the extracellular medium.

It is found in the secreted. It localises to the extracellular space. The protein resides in the extracellular matrix. The protein localises to the extracellular vesicle. Its subcellular location is the endosome. It is found in the multivesicular body. Functionally, APOE is an apolipoprotein, a protein associating with lipid particles, that mainly functions in lipoprotein-mediated lipid transport between organs via the plasma and interstitial fluids. APOE is a core component of plasma lipoproteins and is involved in their production, conversion and clearance. Apolipoproteins are amphipathic molecules that interact both with lipids of the lipoprotein particle core and the aqueous environment of the plasma. As such, APOE associates with chylomicrons, chylomicron remnants, very low density lipoproteins (VLDL) and intermediate density lipoproteins (IDL) but shows a preferential binding to high-density lipoproteins (HDL). It also binds a wide range of cellular receptors including the LDL receptor/LDLR, the LDL receptor-related proteins LRP1, LRP2 and LRP8 and the very low-density lipoprotein receptor/VLDLR that mediate the cellular uptake of the APOE-containing lipoprotein particles. Finally, APOE also has a heparin-binding activity and binds heparan-sulfate proteoglycans on the surface of cells, a property that supports the capture and the receptor-mediated uptake of APOE-containing lipoproteins by cells. A main function of APOE is to mediate lipoprotein clearance through the uptake of chylomicrons, VLDLs, and HDLs by hepatocytes. APOE is also involved in the biosynthesis by the liver of VLDLs as well as their uptake by peripheral tissues ensuring the delivery of triglycerides and energy storage in muscle, heart and adipose tissues. By participating in the lipoprotein-mediated distribution of lipids among tissues, APOE plays a critical role in plasma and tissues lipid homeostasis. APOE is also involved in two steps of reverse cholesterol transport, the HDLs-mediated transport of cholesterol from peripheral tissues to the liver, and thereby plays an important role in cholesterol homeostasis. First, it is functionally associated with ABCA1 in the biogenesis of HDLs in tissues. Second, it is enriched in circulating HDLs and mediates their uptake by hepatocytes. APOE also plays an important role in lipid transport in the central nervous system, regulating neuron survival and sprouting. The protein is Apolipoprotein E (APOE) of Saimiri sciureus (Common squirrel monkey).